A 201-amino-acid chain; its full sequence is Oligoribonuclease (201 aa).

In terms of domain architecture, Exonuclease spans 20-183 (LVWLDMEMTG…ADIHESIDEL (164 aa)). Tyr-141 is a catalytic residue.

Belongs to the oligoribonuclease family.

It is found in the cytoplasm. Functionally, 3'-to-5' exoribonuclease specific for small oligoribonucleotides. The chain is Oligoribonuclease from Burkholderia pseudomallei (strain 1106a).